The chain runs to 94 residues: CRISPR-associated endoribonuclease Cas2 (94 aa).

Mg(2+) is bound at residue D11.

Belongs to the CRISPR-associated endoribonuclease Cas2 protein family. As to quaternary structure, homodimer, forms a heterotetramer with a Cas1 homodimer. Requires Mg(2+) as cofactor.

In terms of biological role, CRISPR (clustered regularly interspaced short palindromic repeat), is an adaptive immune system that provides protection against mobile genetic elements (viruses, transposable elements and conjugative plasmids). CRISPR clusters contain sequences complementary to antecedent mobile elements and target invading nucleic acids. CRISPR clusters are transcribed and processed into CRISPR RNA (crRNA). Functions as a ssRNA-specific endoribonuclease. Involved in the integration of spacer DNA into the CRISPR cassette. The polypeptide is CRISPR-associated endoribonuclease Cas2 (Allochromatium vinosum (strain ATCC 17899 / DSM 180 / NBRC 103801 / NCIMB 10441 / D) (Chromatium vinosum)).